A 299-amino-acid polypeptide reads, in one-letter code: ATP phosphoribosyltransferase (299 aa).

Belongs to the ATP phosphoribosyltransferase family. Long subfamily. Requires Mg(2+) as cofactor.

Its subcellular location is the cytoplasm. The enzyme catalyses 1-(5-phospho-beta-D-ribosyl)-ATP + diphosphate = 5-phospho-alpha-D-ribose 1-diphosphate + ATP. The protein operates within amino-acid biosynthesis; L-histidine biosynthesis; L-histidine from 5-phospho-alpha-D-ribose 1-diphosphate: step 1/9. Its activity is regulated as follows. Feedback inhibited by histidine. Catalyzes the condensation of ATP and 5-phosphoribose 1-diphosphate to form N'-(5'-phosphoribosyl)-ATP (PR-ATP). Has a crucial role in the pathway because the rate of histidine biosynthesis seems to be controlled primarily by regulation of HisG enzymatic activity. This is ATP phosphoribosyltransferase from Shewanella denitrificans (strain OS217 / ATCC BAA-1090 / DSM 15013).